We begin with the raw amino-acid sequence, 874 residues long: Alanine--tRNA ligase (874 aa).

Zn(2+)-binding residues include H564, H568, C665, and H669.

It belongs to the class-II aminoacyl-tRNA synthetase family. It depends on Zn(2+) as a cofactor.

Its subcellular location is the cytoplasm. The catalysed reaction is tRNA(Ala) + L-alanine + ATP = L-alanyl-tRNA(Ala) + AMP + diphosphate. In terms of biological role, catalyzes the attachment of alanine to tRNA(Ala) in a two-step reaction: alanine is first activated by ATP to form Ala-AMP and then transferred to the acceptor end of tRNA(Ala). Also edits incorrectly charged Ser-tRNA(Ala) and Gly-tRNA(Ala) via its editing domain. The protein is Alanine--tRNA ligase of Cupriavidus metallidurans (strain ATCC 43123 / DSM 2839 / NBRC 102507 / CH34) (Ralstonia metallidurans).